The following is a 192-amino-acid chain: Small ribosomal subunit protein uS5 (192 aa).

Residues 1 to 21 (MAAERERGGRERGGRDRDERD) form a disordered region. Positions 24–87 (FVDKLVHINR…DSAKRNLTRV (64 aa)) constitute an S5 DRBM domain.

This sequence belongs to the universal ribosomal protein uS5 family. Part of the 30S ribosomal subunit. Contacts proteins S4 and S8.

Functionally, with S4 and S12 plays an important role in translational accuracy. In terms of biological role, located at the back of the 30S subunit body where it stabilizes the conformation of the head with respect to the body. This is Small ribosomal subunit protein uS5 from Afipia carboxidovorans (strain ATCC 49405 / DSM 1227 / KCTC 32145 / OM5) (Oligotropha carboxidovorans).